A 476-amino-acid polypeptide reads, in one-letter code: Serine/threonine-protein kinase PknF (476 aa).

Residues 12–279 (FTIVRQLGSG…FARALGHRLG (268 aa)) enclose the Protein kinase domain. ATP-binding positions include 18–26 (LGSGGMGEV) and Lys41. Residue Asp137 is the Proton acceptor of the active site. Residues 306 to 326 (TAVIVPAVLAMLLVMAVAVAV) form a helical membrane-spanning segment. Residues 332 to 376 (ADDERAAQPARTRTTTSAGTTTSVAPASTTRPAPTTPTTTGAADT) form a disordered region. Over residues 338 to 376 (AQPARTRTTTSAGTTTSVAPASTTRPAPTTPTTTGAADT) the composition is skewed to low complexity.

The protein belongs to the protein kinase superfamily. Ser/Thr protein kinase family. Autophosphorylated. Dephosphorylated by PstP.

The protein resides in the cell membrane. It catalyses the reaction L-seryl-[protein] + ATP = O-phospho-L-seryl-[protein] + ADP + H(+). It carries out the reaction L-threonyl-[protein] + ATP = O-phospho-L-threonyl-[protein] + ADP + H(+). Its function is as follows. A serine/threonine-protein kinase, acts on HupB in vitro. The polypeptide is Serine/threonine-protein kinase PknF (Mycobacterium tuberculosis (strain ATCC 25177 / H37Ra)).